Reading from the N-terminus, the 214-residue chain is Potassium/proton antiporter CemA (214 aa).

The next 2 helical transmembrane spans lie at 92–112 (ILHL…SILG) and 174–194 (IISG…KYWI).

Belongs to the CemA family.

The protein resides in the plastid. It localises to the chloroplast inner membrane. The catalysed reaction is K(+)(in) + H(+)(out) = K(+)(out) + H(+)(in). Its function is as follows. Contributes to K(+)/H(+) antiport activity by supporting proton efflux to control proton extrusion and homeostasis in chloroplasts in a light-dependent manner to modulate photosynthesis. Prevents excessive induction of non-photochemical quenching (NPQ) under continuous-light conditions. Indirectly promotes efficient inorganic carbon uptake into chloroplasts. In Oenothera argillicola (Appalachian evening primrose), this protein is Potassium/proton antiporter CemA.